Here is a 220-residue protein sequence, read N- to C-terminus: Membrane steroid-binding protein 1 (220 aa).

Residues Val22 to Phe42 form a helical membrane-spanning segment. Positions Glu74–Lys171 constitute a Cytochrome b5 heme-binding domain. The segment at Glu74 to Lys171 is steroid-binding. The interval Gly174–Glu220 is disordered. Residues Glu178–Gly200 show a composition bias toward polar residues. The segment covering Val203–Glu220 has biased composition (basic and acidic residues).

It belongs to the cytochrome b5 family. MAPR subfamily. In terms of assembly, interacts with BAK1 (via extracellular region). Expressed in cotyledons, stems, roots, leaves, flower and silique stalks, pistils and stigmas, but not in anthers.

It is found in the cell membrane. The protein resides in the endosome membrane. Its function is as follows. MSBP1 can bind to multiple steroid compounds with different affinities. Negatively regulates cell elongation and brassinosteroid signaling. May act as a coreceptor with BAK1 and enhances its endocytosis. The polypeptide is Membrane steroid-binding protein 1 (MSBP1) (Arabidopsis thaliana (Mouse-ear cress)).